We begin with the raw amino-acid sequence, 377 residues long: Flagellin D (377 aa).

Residues 104–128 (NSKADRVAIQEEVTALNDELNRIAE) adopt a coiled-coil conformation.

The protein belongs to the bacterial flagellin family. In terms of assembly, heteromer of multiple flagellin subunits including FlaA, FlaB, FlaC, FlaD and possibly FlaE.

The protein resides in the secreted. The protein localises to the bacterial flagellum. Flagellin is the subunit protein which polymerizes to form the filaments of bacterial flagella. FlaD is not essential for flagellar synthesis and motility. May have a role in virulence unrelated to motility. The polypeptide is Flagellin D (flaD) (Vibrio anguillarum (Listonella anguillarum)).